The primary structure comprises 519 residues: uncharacterized protein (519 aa).

The next 11 helical transmembrane spans lie at 52 to 72, 86 to 106, 119 to 139, 156 to 176, 199 to 219, 231 to 251, 313 to 333, 343 to 363, 374 to 394, 408 to 430, and 477 to 497; these read IYFL…VRGS, LATY…SPIV, TWVV…SYNV, WSFL…GWSL, FFLS…NTFI, LSGY…LVCF, MLSL…VYTG, IWLK…ILVY, VFFP…IQFV, IGGT…PQYV, and TSIV…TPVV.

It localises to the membrane. This is an uncharacterized protein from Schizosaccharomyces pombe (strain 972 / ATCC 24843) (Fission yeast).